Consider the following 496-residue polypeptide: Cytochrome P450 71D181 (496 aa).

A helical; Signal-anchor for type II membrane protein transmembrane segment spans residues 1–21 (MDISILWVAIILVISSYFIFM). Cysteine 435 provides a ligand contact to heme. The disordered stretch occupies residues 471–496 (MSETPGLSGPRKNPLIMVPTIHNPTS).

The protein belongs to the cytochrome P450 family. The cofactor is heme.

Its subcellular location is the membrane. The catalysed reaction is gamma-terpinene + 2 reduced [NADPH--hemoprotein reductase] + 2 O2 = carvacrol + 2 oxidized [NADPH--hemoprotein reductase] + 3 H2O + 2 H(+). The enzyme catalyses (4S)-limonene + reduced [NADPH--hemoprotein reductase] + O2 = (1S,5R)-carveol + oxidized [NADPH--hemoprotein reductase] + H2O + H(+). It carries out the reaction (4R)-limonene + reduced [NADPH--hemoprotein reductase] + O2 = (1R,5S)-carveol + oxidized [NADPH--hemoprotein reductase] + H2O + H(+). It catalyses the reaction alpha-terpinene + 2 reduced [NADPH--hemoprotein reductase] + 2 O2 = carvacrol + 2 oxidized [NADPH--hemoprotein reductase] + 3 H2O + 2 H(+). Its pathway is secondary metabolite biosynthesis; terpenoid biosynthesis. Involved in the biosynthesis of phenolic monoterpenes natural products thymol and carvacrol which have a broad range of biological activities acting as antimicrobial compounds, insecticides, antioxidants and pharmaceutical agents. Catalyzes the C2-hydroxylation of gamma-terpinene and alpha-terpinene to produce carvacrol. Also mediates the C6-hydroxylation of (4S)-limonene and (4R)-limonene to form carveol. The chain is Cytochrome P450 71D181 from Thymus vulgaris (Thyme).